The chain runs to 76 residues: Large ribosomal subunit protein eL20 (76 aa).

The protein belongs to the eukaryotic ribosomal protein eL20 family. Part of the 50S ribosomal subunit. Binds 23S rRNA.

In Methanococcus vannielii (strain ATCC 35089 / DSM 1224 / JCM 13029 / OCM 148 / SB), this protein is Large ribosomal subunit protein eL20.